Here is a 194-residue protein sequence, read N- to C-terminus: Mitochondrial import inner membrane translocase subunit Tim22 (194 aa).

2 disulfide bridges follow: Cys-69–Cys-141 and Cys-160–Cys-179. The next 3 membrane-spanning stretches (helical) occupy residues 74–94 (ALAC…TAGI), 123–143 (MSYA…ECLV), and 170–190 (AGLK…AAID).

The protein belongs to the Tim17/Tim22/Tim23 family. Component of the TIM22 complex, whose core is composed of TIMM22, associated with peripheral protein FXC1/TIMM10B and the 70 kDa heterohexamer. In most cases, the 70 kDa complex is composed of TIMM9 and TIMM10 (TIMM10A or TIMM10B). A small fraction of the 70 kDa complex is composed of TIMM8 (TIMM8A/DDP1 or TIMM8B/DDP2) and TIMM13. The TIM22 complex also contains AGK and TIMM29. Interacts directly with TIMM9, TIMM10A and FXC1/TIMM10B. Interacts (when oxidized) with TIMM29; interaction is direct. Disulfide bonds promote efficient assembly of the TIM22 complex.

It localises to the mitochondrion inner membrane. In terms of biological role, essential core component of the TIM22 complex, a complex that mediates the import and insertion of multi-pass transmembrane proteins into the mitochondrial inner membrane. In the TIM22 complex, it constitutes the voltage-activated and signal-gated channel. Forms a twin-pore translocase that uses the membrane potential as external driving force in 2 voltage-dependent steps. This is Mitochondrial import inner membrane translocase subunit Tim22 (TIMM22) from Bos taurus (Bovine).